A 108-amino-acid polypeptide reads, in one-letter code: MNLNIETTTQDKFYEVKVGGELDVYTVPELEEVLTPMRQDGTRDIYVNLENVSYMDSTGLGLFVGTLKALNQNDKELYILGVSDRIGRLFEITGLKDLMHVNEGTEVE.

One can recognise an STAS domain in the interval 3–108 (LNIETTTQDK…MHVNEGTEVE (106 aa)). A Phosphoserine modification is found at serine 57.

It belongs to the anti-sigma-factor antagonist family. In terms of processing, phosphorylated by RsbW on a serine residue.

Functionally, positive regulator of sigma-B activity. Non-phosphorylated RsbV binds to RsbW, preventing its association with sigma-B. When phosphorylated, releases RsbW, which is then free to complex with and inactivate sigma-B. The protein is Anti-sigma-B factor antagonist (rsbV) of Staphylococcus aureus (strain NCTC 8325 / PS 47).